The sequence spans 304 residues: Nod factor export ATP-binding protein I (304 aa).

The 231-residue stretch at 6–236 folds into the ABC transporter domain; the sequence is IDFQQVEKRY…EIGCDVIEIY (231 aa). Residue 38–45 coordinates ATP; it reads GPNGAGKT.

The protein belongs to the ABC transporter superfamily. Lipooligosaccharide exporter (TC 3.A.1.102) family. As to quaternary structure, the complex is composed of two ATP-binding proteins (NodI) and two transmembrane proteins (NodJ).

Its subcellular location is the cell inner membrane. In terms of biological role, part of the ABC transporter complex NodIJ involved in the export of the nodulation factors (Nod factors), the bacterial signal molecules that induce symbiosis and subsequent nodulation induction. Nod factors are LCO (lipo-chitin oligosaccharide), a modified beta-1,4-linked N-acetylglucosamine oligosaccharide. This subunit is responsible for energy coupling to the transport system. This chain is Nod factor export ATP-binding protein I, found in Burkholderia thailandensis (strain ATCC 700388 / DSM 13276 / CCUG 48851 / CIP 106301 / E264).